A 114-amino-acid chain; its full sequence is Small nuclear ribonucleoprotein SmD1a (114 aa).

Residues lysine 2–leucine 74 enclose the Sm domain. The interval valine 87–arginine 114 is disordered. 8 consecutive repeat copies span residues glycine 99–arginine 100, glycine 101–arginine 102, glycine 103–arginine 104, glycine 105–arginine 106, glycine 107–arginine 108, glycine 109–arginine 110, glycine 111–arginine 112, and glycine 113–arginine 114. The 8 X 2 AA tandem repeats of G-R stretch occupies residues glycine 99–arginine 114.

This sequence belongs to the snRNP core protein family.

Its subcellular location is the nucleus. It localises to the nucleus speckle. The protein resides in the nucleolus. Its function is as follows. Involved in splicing regulation. Facilitates post-transcriptional gene silencing (PTGS) by limiting the degradation of transgene aberrant RNAs by the RNA quality control (RQC) machinery, thus favoring their entry into cytoplasmic siRNA bodies where they can trigger PTGS. Does not participate in the production of small RNAs. The protein is Small nuclear ribonucleoprotein SmD1a of Arabidopsis thaliana (Mouse-ear cress).